A 464-amino-acid polypeptide reads, in one-letter code: Maturase K (464 aa).

This sequence belongs to the intron maturase 2 family. MatK subfamily.

The protein localises to the plastid. The protein resides in the chloroplast. Its function is as follows. Usually encoded in the trnK tRNA gene intron. Probably assists in splicing its own and other chloroplast group II introns. This Castanea crenata (Japanese chestnut) protein is Maturase K.